The chain runs to 377 residues: Methionine import ATP-binding protein MetN 2 (377 aa).

An ABC transporter domain is found at 25–262 (IRIEHLSKTF…PKSAVARSFL (238 aa)). 59–66 (GRSGAGKS) contributes to the ATP binding site.

The protein belongs to the ABC transporter superfamily. Methionine importer (TC 3.A.1.24) family. The complex is composed of two ATP-binding proteins (MetN), two transmembrane proteins (MetI) and a solute-binding protein (MetQ).

Its subcellular location is the cell inner membrane. It catalyses the reaction L-methionine(out) + ATP + H2O = L-methionine(in) + ADP + phosphate + H(+). It carries out the reaction D-methionine(out) + ATP + H2O = D-methionine(in) + ADP + phosphate + H(+). Part of the ABC transporter complex MetNIQ involved in methionine import. Responsible for energy coupling to the transport system. The sequence is that of Methionine import ATP-binding protein MetN 2 from Rhodopseudomonas palustris (strain ATCC BAA-98 / CGA009).